Reading from the N-terminus, the 189-residue chain is MQKVNDYMINSMQFLYLVASYLFGNILTAYIVTKWRHNVDIRDEGSGNPGARNMGRVYGKGYFVATFLGDAIKGAIVVSIAKYLFEDFTFVMLTLLAVIMGHIYPMLFKGKGGKGISTFIGGLIAFDYLIALTLVAVFIIFYLIFKGFTKPGLITIACLPLCMILYSYSIVTTILSALIIVLILYVNHE.

Helical transmembrane passes span Met-12–Val-32, Gly-61–Ala-81, Phe-88–Phe-108, Ile-124–Ile-144, and Ile-164–Leu-184.

It belongs to the PlsY family. Probably interacts with PlsX.

The protein resides in the cell membrane. It carries out the reaction an acyl phosphate + sn-glycerol 3-phosphate = a 1-acyl-sn-glycero-3-phosphate + phosphate. It participates in lipid metabolism; phospholipid metabolism. Catalyzes the transfer of an acyl group from acyl-phosphate (acyl-PO(4)) to glycerol-3-phosphate (G3P) to form lysophosphatidic acid (LPA). This enzyme utilizes acyl-phosphate as fatty acyl donor, but not acyl-CoA or acyl-ACP. The sequence is that of Glycerol-3-phosphate acyltransferase 1 from Bacillus anthracis.